The following is a 692-amino-acid chain: Elongation factor G (692 aa).

The 275-residue stretch at 8–282 folds into the tr-type G domain; the sequence is EKTRNIGIMA…AVIDYLPSPL (275 aa). Residues 17–24, 81–85, and 135–138 contribute to the GTP site; these read AHVDAGKT, DTPGH, and NKMD.

It belongs to the TRAFAC class translation factor GTPase superfamily. Classic translation factor GTPase family. EF-G/EF-2 subfamily.

It is found in the cytoplasm. Its function is as follows. Catalyzes the GTP-dependent ribosomal translocation step during translation elongation. During this step, the ribosome changes from the pre-translocational (PRE) to the post-translocational (POST) state as the newly formed A-site-bound peptidyl-tRNA and P-site-bound deacylated tRNA move to the P and E sites, respectively. Catalyzes the coordinated movement of the two tRNA molecules, the mRNA and conformational changes in the ribosome. This Streptococcus agalactiae serotype III (strain NEM316) protein is Elongation factor G.